The sequence spans 587 residues: Folylpolyglutamate synthase, mitochondrial (587 aa).

A mitochondrion-targeting transit peptide spans 1-42; sequence MSWARTHLRSALSLAAVSARGATTEGAARRWLSAWPAPQEPG. 106-109 contacts ATP; it reads GKGS. Ser-130, Glu-200, and His-228 together coordinate Mg(2+). Positions 363 and 377 each coordinate ATP. The tract at residues 484-508 is disordered; it reads PDFLSSPSPEPGRPGSLQPALRPPH. At Ser-539 the chain carries Phosphoserine.

This sequence belongs to the folylpolyglutamate synthase family. Monomer. Requires a monovalent cation as cofactor.

It localises to the mitochondrion inner membrane. It is found in the mitochondrion matrix. The protein localises to the cytoplasm. It carries out the reaction (6S)-5,6,7,8-tetrahydrofolyl-(gamma-L-Glu)(n) + L-glutamate + ATP = (6S)-5,6,7,8-tetrahydrofolyl-(gamma-L-Glu)(n+1) + ADP + phosphate + H(+). The protein operates within cofactor biosynthesis; tetrahydrofolylpolyglutamate biosynthesis. Functionally, catalyzes conversion of folates to polyglutamate derivatives allowing concentration of folate compounds in the cell and the intracellular retention of these cofactors, which are important substrates for most of the folate-dependent enzymes that are involved in one-carbon transfer reactions involved in purine, pyrimidine and amino acid synthesis. This Cricetulus griseus (Chinese hamster) protein is Folylpolyglutamate synthase, mitochondrial (FPGS).